Here is a 609-residue protein sequence, read N- to C-terminus: MCGIVGAIAGRDVVPVLIEGLKRLEYRGYDSSGIAVLESGSIRRVRRTGRVAEMAVAATQEGFTASLGIGHTRWATHGGVTEANAHPHVSHGVVLVHNGIIENYEVQRERLSAFGYVFQSQTDTEVIAHLIHYYMQQGGDLLGALQCAVKALTGIYALAVMSQAEPGRFVCARMGCPLLIGIGDGESFVASDISALIQATRQVIFLEDGDTAEIRRDGISIFNAEQCPVERSLHLSNVSLSSLELGEFRHFMQKEIHEQPRVLADTMEAAIDAAGFPPMLFGAQAESVFRGITGIQILACGTSYYAGLTARYWIEAIAGLPCQVEIASEYRYRKAYVNPQHLVVTISQSGETLDTLEALKYAKALGHRHTLSICNAPDSAIPRISELICYTRAGPEIGVASTKAFTTQLVVLFQLAVALGVLRGAVDAEGEAAYLEQLRQLPCSVQQALNLEPQIAGWAECFSSRHHALFLGRGLHYPIALEGALKLKEISYIHAEAYPAGELKHGPLALVDADMPVVVIAPNDSLLEKVKSNMQEVRARGGELFVFADQDSHFSESEGLHVIRTLRHTGVLSPLVHTIPVQLLAYHTALVRGTDVDKPRNLAKSVTVE.

Cys-2 functions as the Nucleophile; for GATase activity in the catalytic mechanism. The 216-residue stretch at 2–217 folds into the Glutamine amidotransferase type-2 domain; that stretch reads CGIVGAIAGR…DGDTAEIRRD (216 aa). SIS domains lie at 285-425 and 458-599; these read AESV…LRGA and WAEC…VDKP. Lys-604 serves as the catalytic For Fru-6P isomerization activity.

In terms of assembly, homodimer.

The protein resides in the cytoplasm. It carries out the reaction D-fructose 6-phosphate + L-glutamine = D-glucosamine 6-phosphate + L-glutamate. In terms of biological role, catalyzes the first step in hexosamine metabolism, converting fructose-6P into glucosamine-6P using glutamine as a nitrogen source. In Xylella fastidiosa (strain Temecula1 / ATCC 700964), this protein is Glutamine--fructose-6-phosphate aminotransferase [isomerizing].